Here is a 565-residue protein sequence, read N- to C-terminus: Oxygen-dependent choline dehydrogenase (565 aa).

FAD is bound at residue 6–35 (DYIIVGAGSAGNTLATRLTEDAGVTVLLLE). Catalysis depends on His475, which acts as the Proton acceptor.

It belongs to the GMC oxidoreductase family. Requires FAD as cofactor.

The enzyme catalyses choline + A = betaine aldehyde + AH2. The catalysed reaction is betaine aldehyde + NAD(+) + H2O = glycine betaine + NADH + 2 H(+). The protein operates within amine and polyamine biosynthesis; betaine biosynthesis via choline pathway; betaine aldehyde from choline (cytochrome c reductase route): step 1/1. Its function is as follows. Involved in the biosynthesis of the osmoprotectant glycine betaine. Catalyzes the oxidation of choline to betaine aldehyde and betaine aldehyde to glycine betaine at the same rate. In Pseudomonas putida (strain ATCC 700007 / DSM 6899 / JCM 31910 / BCRC 17059 / LMG 24140 / F1), this protein is Oxygen-dependent choline dehydrogenase.